The sequence spans 126 residues: Aspartate 1-decarboxylase (126 aa).

Catalysis depends on Ser25, which acts as the Schiff-base intermediate with substrate; via pyruvic acid. Pyruvic acid (Ser) is present on Ser25. Residue Thr57 coordinates substrate. Tyr58 (proton donor) is an active-site residue. 73-75 provides a ligand contact to substrate; that stretch reads GAA.

It belongs to the PanD family. In terms of assembly, heterooctamer of four alpha and four beta subunits. Pyruvate serves as cofactor. In terms of processing, is synthesized initially as an inactive proenzyme, which is activated by self-cleavage at a specific serine bond to produce a beta-subunit with a hydroxyl group at its C-terminus and an alpha-subunit with a pyruvoyl group at its N-terminus.

The protein resides in the cytoplasm. It carries out the reaction L-aspartate + H(+) = beta-alanine + CO2. It functions in the pathway cofactor biosynthesis; (R)-pantothenate biosynthesis; beta-alanine from L-aspartate: step 1/1. Functionally, catalyzes the pyruvoyl-dependent decarboxylation of aspartate to produce beta-alanine. This is Aspartate 1-decarboxylase from Proteus mirabilis (strain HI4320).